A 223-amino-acid polypeptide reads, in one-letter code: Ribose-5-phosphate isomerase A (223 aa).

Substrate contacts are provided by residues 32 to 35 (TGST), 85 to 88 (DGAD), and 98 to 101 (KGGG). Catalysis depends on Glu107, which acts as the Proton acceptor. Lys125 contacts substrate.

The protein belongs to the ribose 5-phosphate isomerase family. Homodimer.

The enzyme catalyses aldehydo-D-ribose 5-phosphate = D-ribulose 5-phosphate. The protein operates within carbohydrate degradation; pentose phosphate pathway; D-ribose 5-phosphate from D-ribulose 5-phosphate (non-oxidative stage): step 1/1. Its function is as follows. Catalyzes the reversible conversion of ribose-5-phosphate to ribulose 5-phosphate. The chain is Ribose-5-phosphate isomerase A from Pseudomonas syringae pv. syringae (strain B728a).